The following is a 692-amino-acid chain: Methionine--tRNA ligase (692 aa).

The 'HIGH' region motif lies at 12-22; it reads PYANGSFHIGH. The Zn(2+) site is built by Cys143, Cys146, Cys156, and Cys159. The short motif at 341 to 345 is the 'KMSKS' region element; it reads KMSKS. An ATP-binding site is contributed by Lys344. In terms of domain architecture, tRNA-binding spans 586–692; sequence DFAKIDLRIA…PGAQPGMRVR (107 aa).

This sequence belongs to the class-I aminoacyl-tRNA synthetase family. MetG type 1 subfamily. In terms of assembly, homodimer. Requires Zn(2+) as cofactor.

It localises to the cytoplasm. It catalyses the reaction tRNA(Met) + L-methionine + ATP = L-methionyl-tRNA(Met) + AMP + diphosphate. Functionally, is required not only for elongation of protein synthesis but also for the initiation of all mRNA translation through initiator tRNA(fMet) aminoacylation. The polypeptide is Methionine--tRNA ligase (Bordetella pertussis (strain Tohama I / ATCC BAA-589 / NCTC 13251)).